Here is a 356-residue protein sequence, read N- to C-terminus: Dual-specificity RNA methyltransferase RlmN (356 aa).

Residue Glu95 is the Proton acceptor of the active site. The Radical SAM core domain occupies 101-332 (EDERGTLCIS…VTVIRDRRGE (232 aa)). Cys108 and Cys338 are joined by a disulfide. [4Fe-4S] cluster contacts are provided by Cys115, Cys119, and Cys122. S-adenosyl-L-methionine-binding positions include 165-166 (GE), Ser197, 219-221 (SLH), and Asn295. Cys338 functions as the S-methylcysteine intermediate in the catalytic mechanism.

This sequence belongs to the radical SAM superfamily. RlmN family. Requires [4Fe-4S] cluster as cofactor.

It localises to the cytoplasm. It carries out the reaction adenosine(2503) in 23S rRNA + 2 reduced [2Fe-2S]-[ferredoxin] + 2 S-adenosyl-L-methionine = 2-methyladenosine(2503) in 23S rRNA + 5'-deoxyadenosine + L-methionine + 2 oxidized [2Fe-2S]-[ferredoxin] + S-adenosyl-L-homocysteine. The enzyme catalyses adenosine(37) in tRNA + 2 reduced [2Fe-2S]-[ferredoxin] + 2 S-adenosyl-L-methionine = 2-methyladenosine(37) in tRNA + 5'-deoxyadenosine + L-methionine + 2 oxidized [2Fe-2S]-[ferredoxin] + S-adenosyl-L-homocysteine. In terms of biological role, specifically methylates position 2 of adenine 2503 in 23S rRNA and position 2 of adenine 37 in tRNAs. m2A2503 modification seems to play a crucial role in the proofreading step occurring at the peptidyl transferase center and thus would serve to optimize ribosomal fidelity. The protein is Dual-specificity RNA methyltransferase RlmN of Magnetococcus marinus (strain ATCC BAA-1437 / JCM 17883 / MC-1).